The sequence spans 459 residues: MRSALPTFDEIWQRKFRHRLLIQAQQFPADTVFLIGCSGGMDSMLLLHLMSELFPHKVRAIYIDHQLQSSSRAWGVFVQNFAQQSHIPFTIQPVIVDTGNLENQAREARYAAFESHLKSNEVLVLAHHQQDQTETVLLRLLSGSGVKGLGAMKEIEQKKNICCWRPMLSVSRQQIEHWVEHLKIPYIQDLTNFDTTYDRAWCRETVWPVLQKRFPKMQEAISRTSILMQDADEILHEVLQQDLNQCGDLNHLDLSRLQQLSLARQRQLLSFWMKGKAIYRPAFEMVERVQQEVICAKADAKAALHWNHHYYVRYQNILYRVEKNKYLQKDLVSNVVSTIELQMDASLQLASGVFQIQPMQMGLSPQLFEQPLQLLPRQGGEKIHLYGRVGHWPLKKAIQEAQILPWLRHTIQILALDNVMLGVFTPKGFWLAQSSYCEAGGWQPNLISDVNYLRVEQNS.

38-43 contacts ATP; the sequence is SGGMDS.

It belongs to the tRNA(Ile)-lysidine synthase family.

Its subcellular location is the cytoplasm. The enzyme catalyses cytidine(34) in tRNA(Ile2) + L-lysine + ATP = lysidine(34) in tRNA(Ile2) + AMP + diphosphate + H(+). Ligates lysine onto the cytidine present at position 34 of the AUA codon-specific tRNA(Ile) that contains the anticodon CAU, in an ATP-dependent manner. Cytidine is converted to lysidine, thus changing the amino acid specificity of the tRNA from methionine to isoleucine. The protein is tRNA(Ile)-lysidine synthase of Acinetobacter baylyi (strain ATCC 33305 / BD413 / ADP1).